Reading from the N-terminus, the 453-residue chain is Exopolyphosphatase PRUNE1 (453 aa).

Position 1 is an N-acetylmethionine (Met1). Mn(2+) contacts are provided by Asp28, Asp30, Asp106, and Asp179. The DHH motif signature appears at 106-108; the sequence is DHH. Positions 393–420 are essential for homodimerization; that stretch reads SLLSGLSQDEEEPPLPPTPMNSLVDECP. The tract at residues 396–419 is disordered; it reads SGLSQDEEEPPLPPTPMNSLVDEC. Ser399 is subject to Phosphoserine. Residue Thr410 is modified to Phosphothreonine. Ser414 bears the Phosphoserine mark.

Belongs to the PPase class C family. Prune subfamily. As to quaternary structure, homooligomer. Able to homodimerize via its C-terminal domain. Interacts with NME1. Interacts with GSK3; at focal adhesion complexes where paxillin and vinculin are colocalized. It depends on Mn(2+) as a cofactor.

It localises to the cytoplasm. The protein resides in the nucleus. It is found in the cell junction. Its subcellular location is the focal adhesion. It catalyses the reaction diphosphate + H2O = 2 phosphate + H(+). With respect to regulation, activated by magnesium ions and inhibited by manganese ions. Inhibited by dipyridamole, moderately sensitive to IBMX and inhibited by vinpocetine. Its function is as follows. Phosphodiesterase (PDE) that has higher activity toward cAMP than cGMP, as substrate. Plays a role in cell proliferation, is able to induce cell motility and acts as a negative regulator of NME1. The protein is Exopolyphosphatase PRUNE1 (PRUNE1) of Bos taurus (Bovine).